The following is a 237-amino-acid chain: Urease accessory protein UreF (237 aa).

Belongs to the UreF family. As to quaternary structure, ureD, UreF and UreG form a complex that acts as a GTP-hydrolysis-dependent molecular chaperone, activating the urease apoprotein by helping to assemble the nickel containing metallocenter of UreC. The UreE protein probably delivers the nickel.

It is found in the cytoplasm. In terms of biological role, required for maturation of urease via the functional incorporation of the urease nickel metallocenter. The chain is Urease accessory protein UreF from Streptococcus thermophilus (strain ATCC BAA-250 / LMG 18311).